The sequence spans 150 residues: Troponin C, isoform 1 (150 aa).

At Met-1 the chain carries N-acetylmethionine. EF-hand domains lie at 7–42 (DQVQALQKAFNSFDTDDKGFITPDTVGVILRMMGVK), 43–78 (ISDRHLQEVISETDEDGSGEIEFEEFAALAAKFLSE), 83–118 (ALKKELKEAFRIYDRGGNGYITVHTLKEILRELDNK), and 119–150 (LTEDNLDSIIEEVDEDGSGTIDFNEFMKMMNG). Positions 56, 58, 60, 62, and 67 each coordinate Ca(2+). Ca(2+) is bound by residues Asp-132, Asp-134, Ser-136, Thr-138, and Glu-143.

Belongs to the troponin C family.

Functionally, troponin is the central regulatory protein of striated muscle contraction. Tn consists of three components: Tn-I which is the inhibitor of actomyosin ATPase, Tn-T which contains the binding site for tropomyosin and Tn-C. The binding of calcium to Tn-C abolishes the inhibitory action of Tn on actin filaments. This is Troponin C, isoform 1 from Homarus americanus (American lobster).